Here is a 119-residue protein sequence, read N- to C-terminus: Small ribosomal subunit protein bS16 (119 aa).

Residues 96–107 are compositionally biased toward basic residues; the sequence is RKKRRAYRQRRS. The segment at 96-119 is disordered; it reads RKKRRAYRQRRSTQREEAAKDATK. The span at 108–119 shows a compositional bias: basic and acidic residues; it reads TQREEAAKDATK.

This sequence belongs to the bacterial ribosomal protein bS16 family.

This Chlamydia pneumoniae (Chlamydophila pneumoniae) protein is Small ribosomal subunit protein bS16.